The chain runs to 158 residues: Crossover junction endodeoxyribonuclease RuvC (158 aa).

Residues D7, E66, and D139 contribute to the active site. The Mg(2+) site is built by D7, E66, and D139.

The protein belongs to the RuvC family. In terms of assembly, homodimer which binds Holliday junction (HJ) DNA. The HJ becomes 2-fold symmetrical on binding to RuvC with unstacked arms; it has a different conformation from HJ DNA in complex with RuvA. In the full resolvosome a probable DNA-RuvA(4)-RuvB(12)-RuvC(2) complex forms which resolves the HJ. It depends on Mg(2+) as a cofactor.

The protein resides in the cytoplasm. The enzyme catalyses Endonucleolytic cleavage at a junction such as a reciprocal single-stranded crossover between two homologous DNA duplexes (Holliday junction).. Its function is as follows. The RuvA-RuvB-RuvC complex processes Holliday junction (HJ) DNA during genetic recombination and DNA repair. Endonuclease that resolves HJ intermediates. Cleaves cruciform DNA by making single-stranded nicks across the HJ at symmetrical positions within the homologous arms, yielding a 5'-phosphate and a 3'-hydroxyl group; requires a central core of homology in the junction. The consensus cleavage sequence is 5'-(A/T)TT(C/G)-3'. Cleavage occurs on the 3'-side of the TT dinucleotide at the point of strand exchange. HJ branch migration catalyzed by RuvA-RuvB allows RuvC to scan DNA until it finds its consensus sequence, where it cleaves and resolves the cruciform DNA. The chain is Crossover junction endodeoxyribonuclease RuvC from Nitratiruptor sp. (strain SB155-2).